The following is a 498-amino-acid chain: Guanosine-5'-triphosphate,3'-diphosphate pyrophosphatase (498 aa).

The protein belongs to the GppA/Ppx family. GppA subfamily.

It carries out the reaction guanosine 3'-diphosphate 5'-triphosphate + H2O = guanosine 3',5'-bis(diphosphate) + phosphate + H(+). It functions in the pathway purine metabolism; ppGpp biosynthesis; ppGpp from GTP: step 2/2. Its function is as follows. Catalyzes the conversion of pppGpp to ppGpp. Guanosine pentaphosphate (pppGpp) is a cytoplasmic signaling molecule which together with ppGpp controls the 'stringent response', an adaptive process that allows bacteria to respond to amino acid starvation, resulting in the coordinated regulation of numerous cellular activities. This is Guanosine-5'-triphosphate,3'-diphosphate pyrophosphatase from Pectobacterium atrosepticum (strain SCRI 1043 / ATCC BAA-672) (Erwinia carotovora subsp. atroseptica).